Reading from the N-terminus, the 406-residue chain is Tyrosine--tRNA ligase (406 aa).

Tyrosine 35 contacts L-tyrosine. Positions 40 to 49 (PTADSLHVGH) match the 'HIGH' region motif. 2 residues coordinate L-tyrosine: tyrosine 168 and glutamine 172. A 'KMSKS' region motif is present at residues 228 to 232 (KMGKT). Lysine 231 provides a ligand contact to ATP. One can recognise an S4 RNA-binding domain in the interval 340–404 (SELLDILVEA…RGKKNYNKIV (65 aa)).

Belongs to the class-I aminoacyl-tRNA synthetase family. TyrS type 1 subfamily. In terms of assembly, homodimer.

It localises to the cytoplasm. The catalysed reaction is tRNA(Tyr) + L-tyrosine + ATP = L-tyrosyl-tRNA(Tyr) + AMP + diphosphate + H(+). Its function is as follows. Catalyzes the attachment of tyrosine to tRNA(Tyr) in a two-step reaction: tyrosine is first activated by ATP to form Tyr-AMP and then transferred to the acceptor end of tRNA(Tyr). In Clostridium perfringens (strain ATCC 13124 / DSM 756 / JCM 1290 / NCIMB 6125 / NCTC 8237 / Type A), this protein is Tyrosine--tRNA ligase.